The sequence spans 160 residues: Endoribonuclease YbeY (160 aa).

Positions 125, 129, and 135 each coordinate Zn(2+).

This sequence belongs to the endoribonuclease YbeY family. Requires Zn(2+) as cofactor.

Its subcellular location is the cytoplasm. Its function is as follows. Single strand-specific metallo-endoribonuclease involved in late-stage 70S ribosome quality control and in maturation of the 3' terminus of the 16S rRNA. In Leuconostoc mesenteroides subsp. mesenteroides (strain ATCC 8293 / DSM 20343 / BCRC 11652 / CCM 1803 / JCM 6124 / NCDO 523 / NBRC 100496 / NCIMB 8023 / NCTC 12954 / NRRL B-1118 / 37Y), this protein is Endoribonuclease YbeY.